A 601-amino-acid chain; its full sequence is UvrABC system protein C (601 aa).

Residues 17–95 form the GIY-YIG domain; that stretch reads TLPGVYRMLD…IKALAPRYNI (79 aa). A UVR domain is found at 204–239; sequence SELINELTRRMTAAAEAMAFEQAAELRDQIQALARV.

This sequence belongs to the UvrC family. As to quaternary structure, interacts with UvrB in an incision complex.

The protein resides in the cytoplasm. Its function is as follows. The UvrABC repair system catalyzes the recognition and processing of DNA lesions. UvrC both incises the 5' and 3' sides of the lesion. The N-terminal half is responsible for the 3' incision and the C-terminal half is responsible for the 5' incision. This is UvrABC system protein C from Chromobacterium violaceum (strain ATCC 12472 / DSM 30191 / JCM 1249 / CCUG 213 / NBRC 12614 / NCIMB 9131 / NCTC 9757 / MK).